A 395-amino-acid chain; its full sequence is Chorismate synthase (395 aa).

Belongs to the chorismate synthase family. Homotetramer. Requires FMNH2 as cofactor.

It catalyses the reaction 5-O-(1-carboxyvinyl)-3-phosphoshikimate = chorismate + phosphate. It functions in the pathway metabolic intermediate biosynthesis; chorismate biosynthesis; chorismate from D-erythrose 4-phosphate and phosphoenolpyruvate: step 7/7. The protein is Chorismate synthase of Schizosaccharomyces pombe (strain 972 / ATCC 24843) (Fission yeast).